We begin with the raw amino-acid sequence, 108 residues long: Circadian clock oscillator protein KaiB (108 aa).

The protein belongs to the KaiB family. As to quaternary structure, homodimer, interacts with KaiC. The KaiABC complex composition changes during the circadian cycle to control KaiC phosphorylation. Complexes KaiC(6), KaiA(2-4):KaiC(6), KaiB(6):KaiC(6) and KaiC(6):KaiB(6):KaiA(12) are among the most important forms, many form cooperatively. Undergoes a major conformational rearrangment; in the free state forms homotetramers as a dimer of dimers. When bound to the CI domain of KaiC switches to a monomeric thioredoxin-fold (KaiB(fs)). KaiB(fs) binds CikA, leading it to dephosphorylate phospho-RpaA.

Key component of the KaiABC oscillator complex, which constitutes the main circadian regulator in cyanobacteria. Complex composition changes during the circadian cycle to control KaiC phosphorylation. KaiA stimulates KaiC autophosphorylation, while KaiB sequesters KaiA, leading to KaiC autodephosphorylation. Phospho-Ser-431 KaiC accumulation triggers binding of KaiB to form the KaiB(6):KaiC(6) complex, leading to changes in output regulators CikA and SasA. KaiB switches to a thioredoxin-like fold (KaiB(fs)) when bound to KaiC. KaiB(6):KaiC(6) formation exposes a site for KaiA binding that sequesters KaiA from KaiC, making the KaiC(6):KaiB(6):KaiA(12) complex that results in KaiC autodephosphorylation. Functionally, a metamorphic protein which reversibly switches between an inactive tetrameric fold and a rare, thioredoxin-like monomeric fold (KaiB(fs)). KaiB(fs) binds phospho-KaiC, KaiA and CikA. KaiA and CikA compete for binding to KaiB(fs), and KaiB(fs) and SasA compete for binding to KaiC, thus the clock oscillator and output signal pathway are tightly coupled. The protein is Circadian clock oscillator protein KaiB of Nostoc sp. (strain PCC 7120 / SAG 25.82 / UTEX 2576).